A 156-amino-acid polypeptide reads, in one-letter code: Phosphopantetheine adenylyltransferase (156 aa).

Thr9 is a substrate binding site. ATP-binding positions include 9-10 (TF) and His17. Residues Lys41, Leu73, and Arg87 each contribute to the substrate site. ATP is bound by residues 88–90 (GVR), Glu98, and 123–129 (WAFVSST).

The protein belongs to the bacterial CoaD family. Homohexamer. Mg(2+) serves as cofactor.

The protein resides in the cytoplasm. It catalyses the reaction (R)-4'-phosphopantetheine + ATP + H(+) = 3'-dephospho-CoA + diphosphate. It functions in the pathway cofactor biosynthesis; coenzyme A biosynthesis; CoA from (R)-pantothenate: step 4/5. Its function is as follows. Reversibly transfers an adenylyl group from ATP to 4'-phosphopantetheine, yielding dephospho-CoA (dPCoA) and pyrophosphate. The polypeptide is Phosphopantetheine adenylyltransferase (Haemophilus influenzae (strain ATCC 51907 / DSM 11121 / KW20 / Rd)).